The following is a 154-amino-acid chain: Small ribosomal subunit protein uS9 (154 aa).

The interval K135–R154 is disordered. Residues Y140 to R154 show a composition bias toward basic residues.

Belongs to the universal ribosomal protein uS9 family.

This Salinispora arenicola (strain CNS-205) protein is Small ribosomal subunit protein uS9.